The primary structure comprises 377 residues: 1,3,6,8-tetrahydroxynaphthalene synthase (377 aa).

Residue C164 is part of the active site.

It belongs to the thiolase-like superfamily. Chalcone/stilbene synthases family. As to quaternary structure, homodimer.

It catalyses the reaction 5 malonyl-CoA + 5 H(+) = naphthalene-1,3,6,8-tetrol + 5 CO2 + 5 CoA + H2O. It functions in the pathway pigment biosynthesis; melanin biosynthesis. Functionally, involved in the biosynthesis of melanin but also various secondary metabolites containing a naphthoquinone ring. Catalyzes the iterative condensation of five CoA-linked malonyl units to form a pentaketide intermediate. THNS subsequently catalyzes the dual intramolecular Claisen and aldol condensations of this linear intermediate to produce the fused ring of 1,3,6,8-tetrahydroxynaphthalene (THN). The polypeptide is 1,3,6,8-tetrahydroxynaphthalene synthase (Streptomyces peucetius subsp. caesius).